The chain runs to 1253 residues: Latent-transforming growth factor beta-binding protein 3 (1253 aa).

The first 38 residues, 1 to 38 (MPGPRGAAHGLAPAMRQAGALGLLALLLLALLGPGGGA), serve as a signal peptide directing secretion. N-linked (GlcNAc...) asparagine glycosylation occurs at asparagine 86. In terms of domain architecture, EGF-like 1 spans 106-138 (RVVVCPLPCMNGGQCSSRNQCLCPPDFTGRFCQ). 3 cysteine pairs are disulfide-bonded: cysteine 110/cysteine 120, cysteine 114/cysteine 126, and cysteine 128/cysteine 137. The disordered stretch occupies residues 244–270 (GPNAEGPASSQHLLPHPKPQHPRPPTQ). Residues 274–328 (GRCFQDTLPKQPCGSNPLPGLTKQEDCCGSIGTAWGQSKCHKCPQLQYTGVQKPG) enclose the TB 1 domain. 3 disulfide bridges follow: cysteine 276-cysteine 300, cysteine 286-cysteine 313, and cysteine 301-cysteine 316. N-linked (GlcNAc...) asparagine glycosylation occurs at asparagine 346. The EGF-like 2; calcium-binding domain occupies 352–392 (DINECAMPGMCRHGDCLNNPGSYRCVCPPGHSLGPSRTQCI). 7 cysteine pairs are disulfide-bonded: cysteine 356-cysteine 367, cysteine 362-cysteine 376, cysteine 378-cysteine 391, cysteine 402-cysteine 425, cysteine 412-cysteine 437, cysteine 426-cysteine 440, and cysteine 427-cysteine 452. A TB 2 domain is found at 400–452 (SLCFRLVSTEHQCQHPLTTRLTRQLCCCSVGKAWGARCQRCPADGTAAFKEIC). Residues 475-555 (FSLFLHPDGP…PTFHRFLPDL (81 aa)) are disordered. The EGF-like 3 domain maps to 571–612 (ETDECRLNQNICGHGQCVPGPSDYSCHCNAGYRSHPQHRYCV). Cystine bridges form between cysteine 575–cysteine 587, cysteine 582–cysteine 596, cysteine 598–cysteine 611, cysteine 617–cysteine 629, cysteine 622–cysteine 638, cysteine 661–cysteine 673, cysteine 667–cysteine 682, cysteine 684–cysteine 698, cysteine 745–cysteine 756, cysteine 751–cysteine 765, cysteine 767–cysteine 780, cysteine 786–cysteine 797, cysteine 792–cysteine 806, cysteine 808–cysteine 821, cysteine 827–cysteine 838, cysteine 833–cysteine 847, cysteine 849–cysteine 861, cysteine 867–cysteine 880, cysteine 874–cysteine 889, cysteine 891–cysteine 904, cysteine 916–cysteine 939, cysteine 926–cysteine 951, cysteine 940–cysteine 956, cysteine 941–cysteine 968, cysteine 994–cysteine 1007, cysteine 1002–cysteine 1016, cysteine 1018–cysteine 1031, cysteine 1037–cysteine 1048, cysteine 1043–cysteine 1057, cysteine 1059–cysteine 1072, cysteine 1113–cysteine 1127, and cysteine 1114–cysteine 1136. Positions 613 to 656 (DVNECEAEPCGPGKGICMNTGGSYNCHCNRGYRLHVGAGGRSCV) constitute an EGF-like 4; calcium-binding domain. Residues 657 to 699 (DLNECTKPHLCGDGGFCINFPGHYKCNCYPGYRLKASRPPICE) form the EGF-like 5; calcium-binding domain. The EGF-like 6; calcium-binding domain occupies 741–781 (DVNECSEGTPCSPGWCENLPGSYRCTCAQGYEPAQDGLSCI). Residues 782–822 (DVDECEAGKVCQDGICTNTPGSFQCQCLSGYHLSRDRSRCE) form the EGF-like 7; calcium-binding domain. Positions 823–861 (DIDECDFPAACIGGDCINTNGSYRCLCPQGHRLVGGRKC) constitute an EGF-like 8; calcium-binding domain. Asparagine 842 is a glycosylation site (N-linked (GlcNAc...) asparagine). An EGF-like 9; calcium-binding domain is found at 863 to 905 (DIDECSQDPGLCLPHGACENLQGSYVCVCDEGFTLTQDQHGCE). A TB 3 domain is found at 914 to 968 (KECYLNFDDTVFCDSVLATNVTQQECCCSLGAGWGDHCEIYPCPVYSSAEFHSLC). Asparagine 933 is a glycosylation site (N-linked (GlcNAc...) asparagine). In terms of domain architecture, EGF-like 10; calcium-binding spans 990-1032 (DIDECILFGAEICKEGKCVNTQPGYECYCKQGFYYDGNLLECV). The EGF-like 11; calcium-binding domain maps to 1033–1072 (DVDECLDESNCRNGVCENTRGGYRCACTPPAEYSPAQRQC). The TB 4 domain occupies 1086 to 1136 (EVCWGQRGEDGMCMGPLAGPALTFDDCCCRQGRGWGTQCRPCPPRGTGSQC). Residues 1138 to 1148 (TSQSESNSFWD) show a composition bias toward polar residues. The segment at 1138 to 1169 (TSQSESNSFWDTSPLLLGKSPRDEDSSEEDSD) is disordered. The EGF-like 12; calcium-binding domain maps to 1204–1231 (DIDECRELNQRGLLCKSERCVNTSGSFR). Cystine bridges form between cysteine 1208–cysteine 1223 and cysteine 1218–cysteine 1232. N-linked (GlcNAc...) asparagine glycosylation occurs at asparagine 1225.

Belongs to the LTBP family. As to quaternary structure, forms part of the large latent transforming growth factor beta (TGFB1) precursor complex; removal is essential for activation of complex. Interacts with EFEMP2. Post-translationally, contains hydroxylated asparagine residues. Two intrachain disulfide bonds from the TB3 domain are rearranged upon TGFB1 binding, and form interchain bonds with TGFB1 propeptide, anchoring it to the extracellular matrix.

It localises to the secreted. Its subcellular location is the extracellular space. It is found in the extracellular matrix. Functionally, key regulator of transforming growth factor beta (TGFB1, TGFB2 and TGFB3) that controls TGF-beta activation by maintaining it in a latent state during storage in extracellular space. Associates specifically via disulfide bonds with the Latency-associated peptide (LAP), which is the regulatory chain of TGF-beta, and regulates integrin-dependent activation of TGF-beta. In Mus musculus (Mouse), this protein is Latent-transforming growth factor beta-binding protein 3 (Ltbp3).